A 178-amino-acid polypeptide reads, in one-letter code: Small ribosomal subunit protein uS5 (178 aa).

The 64-residue stretch at 17 to 80 (FEERIVEIRR…AAARASVVEI (64 aa)) folds into the S5 DRBM domain.

Belongs to the universal ribosomal protein uS5 family. Part of the 30S ribosomal subunit. Contacts proteins S4 and S8.

In terms of biological role, with S4 and S12 plays an important role in translational accuracy. Its function is as follows. Located at the back of the 30S subunit body where it stabilizes the conformation of the head with respect to the body. The chain is Small ribosomal subunit protein uS5 from Pseudothermotoga lettingae (strain ATCC BAA-301 / DSM 14385 / NBRC 107922 / TMO) (Thermotoga lettingae).